Here is a 637-residue protein sequence, read N- to C-terminus: Interleukin-17 receptor E (637 aa).

The N-terminal stretch at 1 to 24 is a signal peptide; it reads MGSPRLAALLLSQPLLFICLAVSA. The Extracellular portion of the chain corresponds to 25 to 415; the sequence is QVACPCLPRW…LCPDVSHRHL (391 aa). Residues Asn278 and Asn307 are each glycosylated (N-linked (GlcNAc...) asparagine). The chain crosses the membrane as a helical span at residues 416-436; the sequence is GLLILALLGLTTLLGVVLVLF. Over 437 to 637 the chain is Cytoplasmic; it reads CRRLLPGPGR…TNSPCGFSCL (201 aa). Residues 447-583 enclose the SEFIR domain; that stretch reads TRPVLLLHAA…LLRDLPRLLR (137 aa).

In terms of assembly, forms heterodimers with IL17RE; the heterodimer binds IL17C.

It is found in the cell membrane. Its function is as follows. Specific functional receptor for IL17C, signaling through the NF-kappa-B and MAPK pathways. Requires TRAF3IP2 /ACT1 for signaling. Crucial regulator in innate immunity to bacterial pathogens. This is Interleukin-17 receptor E (Il17re) from Rattus norvegicus (Rat).